The following is a 207-amino-acid chain: Dephospho-CoA kinase (207 aa).

The DPCK domain maps to Val4–Tyr203. Ala12–Thr17 is a binding site for ATP.

The protein belongs to the CoaE family.

It localises to the cytoplasm. The catalysed reaction is 3'-dephospho-CoA + ATP = ADP + CoA + H(+). It functions in the pathway cofactor biosynthesis; coenzyme A biosynthesis; CoA from (R)-pantothenate: step 5/5. In terms of biological role, catalyzes the phosphorylation of the 3'-hydroxyl group of dephosphocoenzyme A to form coenzyme A. The polypeptide is Dephospho-CoA kinase (Staphylococcus aureus (strain USA300)).